The following is a 653-amino-acid chain: Probable potassium transport system protein Kup (653 aa).

Helical transmembrane passes span 37–57, 79–99, 134–154, 168–188, 196–216, 243–263, 278–298, 320–340, 368–388, 397–417, 426–446, and 450–470; these read ALLA…SPLY, VLSL…LLLV, ITLG…TPAI, AVFD…LFLV, IGAV…GLGV, LHGF…EALY, WFSM…ALLL, LVAL…AGVF, IYLP…VLGF, AYGI…YVVA, WVAI…FGAN, and VADG…LMTT.

This sequence belongs to the HAK/KUP transporter (TC 2.A.72) family.

Its subcellular location is the cell inner membrane. The enzyme catalyses K(+)(in) + H(+)(in) = K(+)(out) + H(+)(out). In terms of biological role, transport of potassium into the cell. Likely operates as a K(+):H(+) symporter. In Myxococcus xanthus (strain DK1622), this protein is Probable potassium transport system protein Kup.